The sequence spans 117 residues: MSLDAVGSLETKGFPGVLAAADAMVKTGRVTLVGYIRAGSARFTIIIRGDVSEVKTAMDAGIHAVDKAYGAALETWVIIPRPHENVECVLPIAYNENVERFRESTERPLIGSSQNRS.

One can recognise a BMC domain in the interval 5–91 (AVGSLETKGF…PHENVECVLP (87 aa)).

Belongs to the bacterial microcompartments protein family. CcmK subfamily. Crystallizes as a homohexamer. Interacts stably with CcmK3, forming heterohexamers that can make dodecamers. Heterohexamers have a 1:2 CcmK3:CcmK4 stoichiometry. Upon expression in E.coli forms large aggregates.

Its subcellular location is the carboxysome. In terms of biological role, a probably essential, minor shell protein of the carboxysome, a polyhedral inclusion where RuBisCO (ribulose bisphosphate carboxylase, rbcL-rbcS) is sequestered. Hexamers form sheets that form the facets of the polyhedral carboxysome. In PCC 7418 there are several CcmK paralogs with presumably functional differences. This subunit can probably make both homohexamers and heterohexamers with CcmK3. Both hexamers can also make dodecamers, formation depends on buffer conditions. The protein is Carboxysome shell protein CcmK4 of Halothece sp. (strain PCC 7418) (Synechococcus sp. (strain PCC 7418)).